Reading from the N-terminus, the 166-residue chain is Urease accessory protein UreE (166 aa).

It belongs to the UreE family.

The protein localises to the cytoplasm. Its function is as follows. Involved in urease metallocenter assembly. Binds nickel. Probably functions as a nickel donor during metallocenter assembly. The sequence is that of Urease accessory protein UreE from Pseudomonas fluorescens (strain Pf0-1).